Consider the following 305-residue polypeptide: Probable alpha-L-glutamate ligase (305 aa).

An ATP-grasp domain is found at 119-301 (LQVLAAQHIP…IAGLIIDYLL (183 aa)). ATP is bound by residues Lys155, 192 to 193 (DF), Asp201, and 225 to 227 (RAN). 3 residues coordinate Mg(2+): Asp262, Glu274, and Asn276. The Mn(2+) site is built by Asp262, Glu274, and Asn276.

It belongs to the RimK family. The cofactor is Mg(2+). Mn(2+) is required as a cofactor.

The chain is Probable alpha-L-glutamate ligase from Haemophilus ducreyi (strain 35000HP / ATCC 700724).